A 936-amino-acid chain; its full sequence is Lon protease homolog, mitochondrial (936 aa).

The transit peptide at 1 to 40 (MYATRAIARRLERHAARCKGAHVARAVRGARARTTSAPRA) directs the protein to the mitochondrion. Positions 65 to 95 (AFVSSVDGDGSTGSTGSSSSSSSSAFGDSAS) are disordered. The span at 66–95 (FVSSVDGDGSTGSTGSSSSSSSSAFGDSAS) shows a compositional bias: low complexity. Residues 112 to 352 (VLAVPLPRRP…ATLELLKKEV (241 aa)) form the Lon N-terminal domain. 507–514 (GPPGVGKT) serves as a coordination point for ATP. The Lon proteolytic domain occupies 748–932 (VTPPGVVTGL…DEVYRQALDW (185 aa)). Catalysis depends on residues Ser-838 and Lys-881.

Belongs to the peptidase S16 family. In terms of assembly, homohexamer or homoheptamer. Organized in a ring with a central cavity.

Its subcellular location is the mitochondrion matrix. It carries out the reaction Hydrolysis of proteins in presence of ATP.. Functionally, ATP-dependent serine protease that mediates the selective degradation of misfolded, unassembled or oxidatively damaged polypeptides as well as certain short-lived regulatory proteins in the mitochondrial matrix. May also have a chaperone function in the assembly of inner membrane protein complexes. Participates in the regulation of mitochondrial gene expression and in the maintenance of the integrity of the mitochondrial genome. Binds to mitochondrial DNA in a site-specific manner. In Ostreococcus lucimarinus (strain CCE9901), this protein is Lon protease homolog, mitochondrial.